The chain runs to 324 residues: Annexin A10 (324 aa).

Annexin repeat units lie at residues 17 to 88, 89 to 160, 171 to 243, and 247 to 318; these read FNPM…GLMY, PPPS…NLVQ, AMAA…AIVR, and DKPS…AICA.

This sequence belongs to the annexin family.

The polypeptide is Annexin A10 (Anxa10) (Mus musculus (Mouse)).